Here is a 117-residue protein sequence, read N- to C-terminus: uncharacterized protein (117 aa).

The disordered stretch occupies residues Phe16–Leu56. Over residues Ser31–Leu56 the composition is skewed to low complexity.

This is an uncharacterized protein from Saccharomyces cerevisiae (strain ATCC 204508 / S288c) (Baker's yeast).